The sequence spans 641 residues: Fructose-1,6-bisphosphatase class 3 (641 aa).

It belongs to the FBPase class 3 family. The cofactor is Mn(2+).

It catalyses the reaction beta-D-fructose 1,6-bisphosphate + H2O = beta-D-fructose 6-phosphate + phosphate. Its pathway is carbohydrate biosynthesis; gluconeogenesis. The sequence is that of Fructose-1,6-bisphosphatase class 3 from Bacillus velezensis (strain DSM 23117 / BGSC 10A6 / LMG 26770 / FZB42) (Bacillus amyloliquefaciens subsp. plantarum).